A 332-amino-acid polypeptide reads, in one-letter code: DNA-directed RNA polymerase subunit alpha (332 aa).

The interval 1-234 (MTVTANQVLR…DQLSVFGDFT (234 aa)) is alpha N-terminal domain (alpha-NTD). The interval 248-332 (VDPVLLRPID…AGVASHGMLG (85 aa)) is alpha C-terminal domain (alpha-CTD).

The protein belongs to the RNA polymerase alpha chain family. In terms of assembly, homodimer. The RNAP catalytic core consists of 2 alpha, 1 beta, 1 beta' and 1 omega subunit. When a sigma factor is associated with the core the holoenzyme is formed, which can initiate transcription.

The catalysed reaction is RNA(n) + a ribonucleoside 5'-triphosphate = RNA(n+1) + diphosphate. Its function is as follows. DNA-dependent RNA polymerase catalyzes the transcription of DNA into RNA using the four ribonucleoside triphosphates as substrates. The protein is DNA-directed RNA polymerase subunit alpha of Stenotrophomonas maltophilia (strain R551-3).